Consider the following 944-residue polypeptide: MFQNDVKQPLSWEEFHGPNLGYVLELYDQYVQDPTSVDEDLRGIFDELGAPPSEMKEEIGKKENSVVTSEQIQKIASVVKLAEDIRTYGHLNASVNPLRKEKELQELFPLKEYGLTEEDVKNIPISIISPDAPKHISNGIEAINHLRNTYKRTISFEFDHVHDFEERNWLSKSIESGELFKKKPADKLVSVFKRLTEVEQFEQFLHKTFVGQKRFSIEGLDALVPVLDEIISESVTQGTSNINIGMAHRGRLNVLAHVLGKPYEIIFSEFQHAPNKELVPSEGSIGISYGWTGDVKYHLGADRQIKDEDTKSARVTLANNPSHLEFIDPIIEGSTRAAQELRTQKGYPAQDVEKALAILIHGDAAFPGEGIVAETLNLSQLVGYQVGGTIHIIANNMIGFTTESNESRSTKYASDLAKGFEIPIVHVNADDPEACLAAVQLAVEYRKRFKKDFLIDLIGYRRYGHNEMDEPSTTQPMLYDAVRKHKTVKNIFADKLVSEGLLTKEQREEIEQAVATRIEEAYQKVPSKKEHTIQEIELPEPVSNGFPAVDTSVEFDVLRKLNEELISWPDDFQVFGKLKRILEKRAKVFTDDRKVEWSLGEALAFASILKDGTPIRMTGQDSERGTFAQRNLVLHDSQTGNEFIALHELSDANASFTVHNSPLSEGSVIGFEYGYNVYSPETLVIWEAQFGDFANAAQVYFDQFISAGRAKWGQKSGLVMLLPHGYEGQGPEHSSGRTERFLQSAAENNWTVANLTSAAQYFHILRRQAKMLLREEIRPLVIMTPKSLLRNPNSLSEVQELTDGQFQPVLEQPGLVHDHEKVSRLVLSSGKVSIDISDRFTQMEEPKDWLHIARVEQLYPFPAKDIKAILSKLTNLEEIVWTQEEPQNMGAWGYIEPYLREIAPEKVKVRYIGRRRRSSTAEGDPTVHKKEQERIVSDSLTRKN.

Positions 918 to 944 are disordered; that stretch reads SSTAEGDPTVHKKEQERIVSDSLTRKN. Residues 925-936 show a composition bias toward basic and acidic residues; it reads PTVHKKEQERIV.

It belongs to the alpha-ketoglutarate dehydrogenase family. In terms of assembly, homodimer. Part of the 2-oxoglutarate dehydrogenase (OGDH) complex composed of E1 (2-oxoglutarate dehydrogenase), E2 (dihydrolipoamide succinyltransferase) and E3 (dihydrolipoamide dehydrogenase); the complex contains multiple copies of the three enzymatic components (E1, E2 and E3). Thiamine diphosphate serves as cofactor.

It catalyses the reaction N(6)-[(R)-lipoyl]-L-lysyl-[protein] + 2-oxoglutarate + H(+) = N(6)-[(R)-S(8)-succinyldihydrolipoyl]-L-lysyl-[protein] + CO2. In terms of biological role, E1 component of the 2-oxoglutarate dehydrogenase (OGDH) complex which catalyzes the decarboxylation of 2-oxoglutarate, the first step in the conversion of 2-oxoglutarate to succinyl-CoA and CO(2). The sequence is that of 2-oxoglutarate dehydrogenase E1 component from Bacillus pumilus (strain SAFR-032).